Consider the following 134-residue polypeptide: DNA-binding protein inhibitor ID-2 (134 aa).

Phosphoserine occurs at positions 14 and 25. The region spanning 23–75 (SRSKTPVDDPMSLLYNMNDCYSKLKELVPSIPQNKKVSKMEILQHVIDYILDL) is the bHLH domain. Residues 106–115 (LNTDISILSL) carry the Nuclear export signal motif.

Interacts with GATA4 and NKX2-5. Interacts with NR0B2. Interacts with CLOCK and BMAL1. Interacts with IFI204. Interacts with NEDD9/HEF1. Interacts with ASB4; this interaction promotes ID2 proteasomal degradation. In terms of processing, ubiquitinated in a ASB4-depedent manner, leading to proteasomal degradation. Post-translationally, phosphorylated in vitro by CDK1, PKA and PKC. Highly expressed in early fetal tissues, including those of the central nervous system.

Its subcellular location is the cytoplasm. It localises to the nucleus. Its function is as follows. Transcriptional regulator (lacking a basic DNA binding domain) which negatively regulates the basic helix-loop-helix (bHLH) transcription factors by forming heterodimers and inhibiting their DNA binding and transcriptional activity. Implicated in regulating a variety of cellular processes, including cellular growth, senescence, differentiation, apoptosis, angiogenesis, and neoplastic transformation. Inhibits skeletal muscle and cardiac myocyte differentiation. Regulates the circadian clock by repressing the transcriptional activator activity of the CLOCK-BMAL1 heterodimer. Restricts the CLOCK and BMAL1 localization to the cytoplasm. Plays a role in both the input and output pathways of the circadian clock: in the input component, is involved in modulating the magnitude of photic entrainment and in the output component, contributes to the regulation of a variety of liver clock-controlled genes involved in lipid metabolism. This chain is DNA-binding protein inhibitor ID-2 (ID2), found in Homo sapiens (Human).